We begin with the raw amino-acid sequence, 87 residues long: Small ribosomal subunit protein uS17 (87 aa).

This sequence belongs to the universal ribosomal protein uS17 family. Part of the 30S ribosomal subunit.

Functionally, one of the primary rRNA binding proteins, it binds specifically to the 5'-end of 16S ribosomal RNA. The polypeptide is Small ribosomal subunit protein uS17 (Bacillus thuringiensis (strain Al Hakam)).